The sequence spans 106 residues: uncharacterized protein (106 aa).

This is an uncharacterized protein from Haemophilus influenzae (strain ATCC 51907 / DSM 11121 / KW20 / Rd).